The following is a 218-amino-acid chain: N-(5'-phosphoribosyl)anthranilate isomerase (218 aa).

This sequence belongs to the TrpF family.

It catalyses the reaction N-(5-phospho-beta-D-ribosyl)anthranilate = 1-(2-carboxyphenylamino)-1-deoxy-D-ribulose 5-phosphate. The protein operates within amino-acid biosynthesis; L-tryptophan biosynthesis; L-tryptophan from chorismate: step 3/5. The protein is N-(5'-phosphoribosyl)anthranilate isomerase of Rhodospirillum rubrum (strain ATCC 11170 / ATH 1.1.1 / DSM 467 / LMG 4362 / NCIMB 8255 / S1).